Reading from the N-terminus, the 127-residue chain is Large ribosomal subunit protein bL17 (127 aa).

Belongs to the bacterial ribosomal protein bL17 family. In terms of assembly, part of the 50S ribosomal subunit. Contacts protein L32.

The polypeptide is Large ribosomal subunit protein bL17 (Xanthomonas campestris pv. campestris (strain 8004)).